The chain runs to 173 residues: Putative metal-dependent hydrolase BC_2708 (173 aa).

Positions 65, 156, and 160 each coordinate Zn(2+).

The protein belongs to the metal hydrolase YfiT family. As to quaternary structure, homodimer. Requires Zn(2+) as cofactor.

It localises to the cytoplasm. Functionally, possible metal-dependent hydrolase. This is Putative metal-dependent hydrolase BC_2708 from Bacillus cereus (strain ATCC 14579 / DSM 31 / CCUG 7414 / JCM 2152 / NBRC 15305 / NCIMB 9373 / NCTC 2599 / NRRL B-3711).